We begin with the raw amino-acid sequence, 138 residues long: Small ribosomal subunit protein uS11c (138 aa).

A disordered region spans residues 1–21; it reads MTKSIPRIGSRRGGRIASRKN. Residues 9–21 are compositionally biased toward basic residues; the sequence is GSRRGGRIASRKN.

It belongs to the universal ribosomal protein uS11 family. In terms of assembly, part of the 30S ribosomal subunit.

The protein localises to the plastid. It is found in the chloroplast. This is Small ribosomal subunit protein uS11c from Calycanthus floridus var. glaucus (Eastern sweetshrub).